The following is a 253-amino-acid chain: Small ribosomal subunit protein uS3 (253 aa).

The KH type-2 domain occupies 39 to 107; the sequence is VRRALKKRLY…EVHLNIVEIR (69 aa). Residues 215–253 are disordered; the sequence is LDKRLAGESGPAGEGGGRERGDRPDRGPRRERRGEPSNA. Over residues 230 to 253 the composition is skewed to basic and acidic residues; sequence GGRERGDRPDRGPRRERRGEPSNA.

It belongs to the universal ribosomal protein uS3 family. Part of the 30S ribosomal subunit. Forms a tight complex with proteins S10 and S14.

Binds the lower part of the 30S subunit head. Binds mRNA in the 70S ribosome, positioning it for translation. This is Small ribosomal subunit protein uS3 from Phenylobacterium zucineum (strain HLK1).